Reading from the N-terminus, the 498-residue chain is ATP synthase subunit beta, chloroplastic (498 aa).

172–179 provides a ligand contact to ATP; sequence GGAGVGKT.

It belongs to the ATPase alpha/beta chains family. As to quaternary structure, F-type ATPases have 2 components, CF(1) - the catalytic core - and CF(0) - the membrane proton channel. CF(1) has five subunits: alpha(3), beta(3), gamma(1), delta(1), epsilon(1). CF(0) has four main subunits: a(1), b(1), b'(1) and c(9-12).

The protein resides in the plastid. Its subcellular location is the chloroplast thylakoid membrane. The enzyme catalyses ATP + H2O + 4 H(+)(in) = ADP + phosphate + 5 H(+)(out). In terms of biological role, produces ATP from ADP in the presence of a proton gradient across the membrane. The catalytic sites are hosted primarily by the beta subunits. In Helianthus annuus (Common sunflower), this protein is ATP synthase subunit beta, chloroplastic.